The primary structure comprises 212 residues: Guanylate kinase (212 aa).

The 183-residue stretch at 5 to 187 (GILCIISAPS…ALMHLQSIML (183 aa)) folds into the Guanylate kinase-like domain. Position 12–19 (12–19 (APSGTGKS)) interacts with ATP.

It belongs to the guanylate kinase family.

It localises to the cytoplasm. It catalyses the reaction GMP + ATP = GDP + ADP. Essential for recycling GMP and indirectly, cGMP. The polypeptide is Guanylate kinase (Blochmanniella pennsylvanica (strain BPEN)).